Consider the following 297-residue polypeptide: N-acetylmuramic acid 6-phosphate etherase (297 aa).

Positions 55 to 218 (AAAALKSGGR…STGAMVKFGK (164 aa)) constitute an SIS domain. The Proton donor role is filled by glutamate 83. Glutamate 114 is a catalytic residue.

It belongs to the GCKR-like family. MurNAc-6-P etherase subfamily. In terms of assembly, homodimer.

It catalyses the reaction N-acetyl-D-muramate 6-phosphate + H2O = N-acetyl-D-glucosamine 6-phosphate + (R)-lactate. It participates in amino-sugar metabolism; 1,6-anhydro-N-acetylmuramate degradation. It functions in the pathway amino-sugar metabolism; N-acetylmuramate degradation. The protein operates within cell wall biogenesis; peptidoglycan recycling. In terms of biological role, specifically catalyzes the cleavage of the D-lactyl ether substituent of MurNAc 6-phosphate, producing GlcNAc 6-phosphate and D-lactate. Together with AnmK, is also required for the utilization of anhydro-N-acetylmuramic acid (anhMurNAc) either imported from the medium or derived from its own cell wall murein, and thus plays a role in cell wall recycling. The protein is N-acetylmuramic acid 6-phosphate etherase of Salmonella agona (strain SL483).